The chain runs to 204 residues: Cobalt-containing nitrile hydratase subunit alpha (204 aa).

The Co(2+) site is built by Cys-108, Cys-111, Ser-112, and Cys-113. The residue at position 111 (Cys-111) is a Cysteine sulfinic acid (-SO2H). Residue Cys-113 is modified to Cysteine sulfenic acid (-SOH).

This sequence belongs to the nitrile hydratase subunit alpha family. Heterotetramer of two alpha and two beta chains. The cofactor is Co(2+).

It catalyses the reaction an aliphatic primary amide = an aliphatic nitrile + H2O. In terms of biological role, NHase catalyzes the hydration of various nitrile compounds to the corresponding amides. The protein is Cobalt-containing nitrile hydratase subunit alpha of Pseudonocardia thermophila.